Reading from the N-terminus, the 195-residue chain is CASP-like protein 2C2 (195 aa).

Residues 1 to 18 (MAATTAAAAVPGVVRAER) lie on the Cytoplasmic side of the membrane. Residues 19-39 (LLRGGCVVMAATAALLLGFSA) traverse the membrane as a helical segment. At 40–57 (ETKTVLFVRKTAVAKDVQ) the chain is on the extracellular side. A helical membrane pass occupies residues 58 to 78 (ALWVLTVAAAAAAGYQFAQLV). Topologically, residues 79–106 (RCMYCSSSGDAGAMAVAWTSFLLDKGCA) are cytoplasmic. Residues 107–127 (YVVFASTAAALQACMVGLIGV) form a helical membrane-spanning segment. At 128 to 145 (EALQWSKLCNIYTRFCEQ) the chain is on the extracellular side. Residues 146-166 (AAAGMLCSFLAAAGMAVLSAF) form a helical membrane-spanning segment. The Cytoplasmic portion of the chain corresponds to 167-195 (SARRLFRLYSPAGHRRSCPRAAVLATSPH).

The protein belongs to the Casparian strip membrane proteins (CASP) family. Homodimer and heterodimers.

The protein resides in the cell membrane. The sequence is that of CASP-like protein 2C2 from Oryza sativa subsp. japonica (Rice).